We begin with the raw amino-acid sequence, 349 residues long: Glucose 1-dehydrogenase 1 (349 aa).

Residue cysteine 39 coordinates Zn(2+). Substrate is bound at residue threonine 41. Zn(2+)-binding residues include histidine 64 and glutamate 65. The substrate site is built by glutamate 110 and glutamate 146. Residue glutamate 146 coordinates Zn(2+). NADP(+) contacts are provided by residues 178–181 (AGPI), 260–262 (LGV), and 289–291 (SVN). Asparagine 291 contacts substrate.

It belongs to the zinc-containing alcohol dehydrogenase family. Glucose 1-dehydrogenase subfamily. The cofactor is Zn(2+).

The enzyme catalyses D-glucose + NAD(+) = D-glucono-1,5-lactone + NADH + H(+). The catalysed reaction is D-glucose + NADP(+) = D-glucono-1,5-lactone + NADPH + H(+). Catalyzes the NAD(P)(+)-dependent oxidation of D-glucose to D-gluconate via gluconolactone. Can utilize both NAD(+) and NADP(+) as electron acceptor. Is involved in the degradation of glucose through a non-phosphorylative variant of the Entner-Doudoroff pathway. In Caldivirga maquilingensis (strain ATCC 700844 / DSM 13496 / JCM 10307 / IC-167), this protein is Glucose 1-dehydrogenase 1.